The following is a 231-amino-acid chain: Phosphoheptose isomerase (231 aa).

Residues Leu-35 to Arg-190 enclose the SIS domain. Asn-50–Gly-52 contacts substrate. Zn(2+)-binding residues include His-59 and Glu-63. Residues Glu-63, Asn-92 to Asp-93, Ser-118 to Ser-120, Ser-123, and Gln-170 contribute to the substrate site. Zn(2+)-binding residues include Gln-170 and His-178. Low complexity-rich tracts occupy residues Ala-197 to Arg-206 and Ala-214 to Ala-225. The disordered stretch occupies residues Ala-197–Arg-231.

The protein belongs to the SIS family. GmhA subfamily. The cofactor is Zn(2+).

It localises to the cytoplasm. The catalysed reaction is 2 D-sedoheptulose 7-phosphate = D-glycero-alpha-D-manno-heptose 7-phosphate + D-glycero-beta-D-manno-heptose 7-phosphate. It functions in the pathway carbohydrate biosynthesis; D-glycero-D-manno-heptose 7-phosphate biosynthesis; D-glycero-alpha-D-manno-heptose 7-phosphate and D-glycero-beta-D-manno-heptose 7-phosphate from sedoheptulose 7-phosphate: step 1/1. Catalyzes the isomerization of sedoheptulose 7-phosphate in D-glycero-D-manno-heptose 7-phosphate. The polypeptide is Phosphoheptose isomerase (Streptomyces coelicolor (strain ATCC BAA-471 / A3(2) / M145)).